The following is a 384-amino-acid chain: Cobalt-precorrin-5B C(1)-methyltransferase (384 aa).

It belongs to the CbiD family.

The enzyme catalyses Co-precorrin-5B + S-adenosyl-L-methionine = Co-precorrin-6A + S-adenosyl-L-homocysteine. The protein operates within cofactor biosynthesis; adenosylcobalamin biosynthesis; cob(II)yrinate a,c-diamide from sirohydrochlorin (anaerobic route): step 6/10. In terms of biological role, catalyzes the methylation of C-1 in cobalt-precorrin-5B to form cobalt-precorrin-6A. The polypeptide is Cobalt-precorrin-5B C(1)-methyltransferase (Marinomonas sp. (strain MWYL1)).